Here is a 171-residue protein sequence, read N- to C-terminus: Peptide methionine sulfoxide reductase MsrA (171 aa).

Residue Cys13 is part of the active site.

This sequence belongs to the MsrA Met sulfoxide reductase family.

It carries out the reaction L-methionyl-[protein] + [thioredoxin]-disulfide + H2O = L-methionyl-(S)-S-oxide-[protein] + [thioredoxin]-dithiol. The enzyme catalyses [thioredoxin]-disulfide + L-methionine + H2O = L-methionine (S)-S-oxide + [thioredoxin]-dithiol. Its function is as follows. Has an important function as a repair enzyme for proteins that have been inactivated by oxidation. Catalyzes the reversible oxidation-reduction of methionine sulfoxide in proteins to methionine. The polypeptide is Peptide methionine sulfoxide reductase MsrA (Mycolicibacterium paratuberculosis (strain ATCC BAA-968 / K-10) (Mycobacterium paratuberculosis)).